Reading from the N-terminus, the 158-residue chain is Ribosomal RNA large subunit methyltransferase H (158 aa).

Residues Leu-74, Gly-105, and 124-129 (LGPLTL) contribute to the S-adenosyl-L-methionine site.

Belongs to the RNA methyltransferase RlmH family. Homodimer.

It localises to the cytoplasm. It carries out the reaction pseudouridine(1915) in 23S rRNA + S-adenosyl-L-methionine = N(3)-methylpseudouridine(1915) in 23S rRNA + S-adenosyl-L-homocysteine + H(+). Its function is as follows. Specifically methylates the pseudouridine at position 1915 (m3Psi1915) in 23S rRNA. The chain is Ribosomal RNA large subunit methyltransferase H from Xylella fastidiosa (strain Temecula1 / ATCC 700964).